Reading from the N-terminus, the 132-residue chain is Small ribosomal subunit protein uS8 (132 aa).

This sequence belongs to the universal ribosomal protein uS8 family. As to quaternary structure, part of the 30S ribosomal subunit. Contacts proteins S5 and S12.

Its function is as follows. One of the primary rRNA binding proteins, it binds directly to 16S rRNA central domain where it helps coordinate assembly of the platform of the 30S subunit. The polypeptide is Small ribosomal subunit protein uS8 (Shouchella clausii (strain KSM-K16) (Alkalihalobacillus clausii)).